The primary structure comprises 292 residues: Histamine N-methyltransferase (292 aa).

Residue E28 participates in substrate binding. Positions 60, 89, 94, 120, and 142 each coordinate S-adenosyl-L-methionine. Residue N283 coordinates substrate.

It belongs to the class I-like SAM-binding methyltransferase superfamily. HNMT family. As to quaternary structure, monomer.

Its subcellular location is the cytoplasm. The catalysed reaction is histamine + S-adenosyl-L-methionine = N(tau)-methylhistamine + S-adenosyl-L-homocysteine + H(+). In terms of biological role, inactivates histamine by N-methylation. Plays an important role in degrading histamine and in regulating the airway response to histamine. In Homo sapiens (Human), this protein is Histamine N-methyltransferase (HNMT).